The following is a 206-amino-acid chain: dITP/XTP pyrophosphatase (206 aa).

10 to 15 (SRNAKK) provides a ligand contact to substrate. Asp-75 acts as the Proton acceptor in catalysis. Asp-75 provides a ligand contact to Mg(2+). Substrate-binding positions include Ser-76, 158 to 161 (FGYD), Lys-181, and 186 to 187 (HR).

Belongs to the HAM1 NTPase family. Homodimer. The cofactor is Mg(2+).

The enzyme catalyses XTP + H2O = XMP + diphosphate + H(+). It catalyses the reaction dITP + H2O = dIMP + diphosphate + H(+). The catalysed reaction is ITP + H2O = IMP + diphosphate + H(+). Its function is as follows. Pyrophosphatase that catalyzes the hydrolysis of nucleoside triphosphates to their monophosphate derivatives, with a high preference for the non-canonical purine nucleotides XTP (xanthosine triphosphate), dITP (deoxyinosine triphosphate) and ITP. Seems to function as a house-cleaning enzyme that removes non-canonical purine nucleotides from the nucleotide pool, thus preventing their incorporation into DNA/RNA and avoiding chromosomal lesions. This chain is dITP/XTP pyrophosphatase, found in Nocardia farcinica (strain IFM 10152).